The sequence spans 152 residues: Protein SprT-like (152 aa).

A SprT-like domain is found at 7-147; the sequence is QRLVEEVSLQ…CGKCKGKLKP (141 aa). His-67 provides a ligand contact to Zn(2+). Residue Glu-68 is part of the active site. Residue His-71 participates in Zn(2+) binding.

It belongs to the SprT family. Zn(2+) serves as cofactor.

It localises to the cytoplasm. In Bacillus cereus (strain B4264), this protein is Protein SprT-like.